We begin with the raw amino-acid sequence, 156 residues long: Movement protein P17 (156 aa).

The tract at residues 38-54 is homodimerization; sequence AEDAEEEAIAAQEELEF. 2 disordered regions span residues 55-80 and 106-156; these read PEDEAQARHSCLQRTTSWATPKEVSP and ASYF…IKRG. The tract at residues 57–156 is RNA-binding; the sequence is DEAQARHSCL…RAAPKLIKRG (100 aa). S71, S79, S137, and S140 each carry phosphoserine. Basic residues predominate over residues 144–156; that stretch reads KLRRAAPKLIKRG.

This sequence belongs to the polerovirus movement protein family. In terms of assembly, homodimer. In terms of processing, expressed as a nonphosphorylated 20kDa form and a phosphorylated 22kDa form. Phosphorylated by a host PKC-related kinase. Serine phosphorylation is required for plamodesma targeting.

The protein localises to the host cell junction. It localises to the host plasmodesma. It is found in the host chloroplast envelope. Its subcellular location is the host Golgi apparatus. The protein resides in the host mitochondrion outer membrane. In terms of biological role, together with movement protein P3a, facilitates long-distance movement of virions in host. Transports viral genome to neighboring plant cells directly through plasmosdesmata, without any budding. The movement protein allows efficient cell to cell propagation, by bypassing the host cell wall barrier. Binds ssRNA. This chain is Movement protein P17, found in Potato leafroll virus (strain Potato/Canada/Rowhani/1979) (PLrV).